We begin with the raw amino-acid sequence, 432 residues long: Nuclear pore complex-interacting protein family member B8 (432 aa).

Disordered stretches follow at residues 260 to 280 (RMGRQPPPPTQQHSITDNSLS) and 353 to 420 (SPLP…LRTR). Positions 270–280 (QQHSITDNSLS) are enriched in polar residues. Positions 374 to 402 (EVEKPPKPKRWRVDEVEQSPKPKRQREAE) are enriched in basic and acidic residues. Residues 408 to 420 (KPKRRRLSKLRTR) show a composition bias toward basic residues.

The protein belongs to the NPIP family.

In Homo sapiens (Human), this protein is Nuclear pore complex-interacting protein family member B8 (NPIPB8).